The sequence spans 488 residues: UDP-N-acetylmuramoyl-L-alanyl-D-glutamate--2,6-diaminopimelate ligase (488 aa).

Residues Leu24, Ser26, and 41 to 43 (HQV) each bind UDP-N-acetyl-alpha-D-muramoyl-L-alanyl-D-glutamate. Residue 113–119 (GTNGKTT) coordinates ATP. Residues Asn154, 155–156 (TT), Ser182, Gln188, and Arg190 each bind UDP-N-acetyl-alpha-D-muramoyl-L-alanyl-D-glutamate. The residue at position 222 (Lys222) is an N6-carboxylysine. Meso-2,6-diaminopimelate is bound by residues Arg386, 410 to 413 (DNPR), Gly461, and Glu465. The Meso-diaminopimelate recognition motif signature appears at 410 to 413 (DNPR).

It belongs to the MurCDEF family. MurE subfamily. Mg(2+) serves as cofactor. In terms of processing, carboxylation is probably crucial for Mg(2+) binding and, consequently, for the gamma-phosphate positioning of ATP.

Its subcellular location is the cytoplasm. It carries out the reaction UDP-N-acetyl-alpha-D-muramoyl-L-alanyl-D-glutamate + meso-2,6-diaminopimelate + ATP = UDP-N-acetyl-alpha-D-muramoyl-L-alanyl-gamma-D-glutamyl-meso-2,6-diaminopimelate + ADP + phosphate + H(+). Its pathway is cell wall biogenesis; peptidoglycan biosynthesis. In terms of biological role, catalyzes the addition of meso-diaminopimelic acid to the nucleotide precursor UDP-N-acetylmuramoyl-L-alanyl-D-glutamate (UMAG) in the biosynthesis of bacterial cell-wall peptidoglycan. The chain is UDP-N-acetylmuramoyl-L-alanyl-D-glutamate--2,6-diaminopimelate ligase from Haemophilus influenzae (strain 86-028NP).